The following is a 1142-amino-acid chain: Desmoglein-2.1 (1142 aa).

Positions 1–18 are cleaved as a signal peptide; the sequence is MARRISPVVAFLLCFGLS. The propeptide occupies 19-38; it reads HFFEAEARLQHSVALHRQKR. Over 39 to 643 the chain is Extracellular; that stretch reads EWIVPPQILE…AKKGSRLGPA (605 aa). Cadherin domains are found at residues 64 to 148, 156 to 258, 259 to 416, and 417 to 527; these read SDKE…APVF, VDEL…VPTL, GGPY…GPKF, and FPGT…CPTL. Asn115 is a glycosylation site (N-linked (GlcNAc...) asparagine). Residues 369 to 389 form a disordered region; sequence SGAAGGAGAMGGASGSGGGTG. Asn490 and Asn576 each carry an N-linked (GlcNAc...) asparagine glycan. A helical transmembrane segment spans residues 644–664; it reads GIGLLLLALLALLLIPLLLLL. The Cytoplasmic portion of the chain corresponds to 665–1142; the sequence is CTCGMTGAFT…RKVVTTQSVK (478 aa). Desmoglein repeat repeat units follow at residues 948 to 974, 975 to 998, 999 to 1039, and 1040 to 1071; these read VEQQ…NSGP, VAEG…ERMV, LVFR…VLQG, and TIQR…NGIS.

Its subcellular location is the cell junction. It is found in the desmosome. It localises to the cell membrane. The protein resides in the cytoplasm. Its function is as follows. A component of desmosome cell-cell junctions which are required for positive regulation of cellular adhesion. Involved in the interaction of plaque proteins and intermediate filaments mediating cell-cell adhesion. Required for embryogenesis, specifically for progression of epiboly and normal convergence-extension movements during gastrulation. The polypeptide is Desmoglein-2.1 (Danio rerio (Zebrafish)).